A 555-amino-acid polypeptide reads, in one-letter code: Urocanate hydratase (555 aa).

Residues 52-53, Gln130, 176-178, Glu196, Arg201, 242-243, 263-267, 273-274, and Tyr322 each bind NAD(+); these read GG, GMG, NA, QTSAH, and YL. Residue Cys410 is part of the active site. Position 492 (Gly492) interacts with NAD(+).

It belongs to the urocanase family. It depends on NAD(+) as a cofactor.

The protein resides in the cytoplasm. It carries out the reaction 4-imidazolone-5-propanoate = trans-urocanate + H2O. It functions in the pathway amino-acid degradation; L-histidine degradation into L-glutamate; N-formimidoyl-L-glutamate from L-histidine: step 2/3. Catalyzes the conversion of urocanate to 4-imidazolone-5-propionate. The polypeptide is Urocanate hydratase (Shewanella baltica (strain OS185)).